A 397-amino-acid polypeptide reads, in one-letter code: Lipid-A-disaccharide synthase (397 aa).

This sequence belongs to the LpxB family.

It catalyses the reaction a lipid X + a UDP-2-N,3-O-bis[(3R)-3-hydroxyacyl]-alpha-D-glucosamine = a lipid A disaccharide + UDP + H(+). It functions in the pathway bacterial outer membrane biogenesis; LPS lipid A biosynthesis. Condensation of UDP-2,3-diacylglucosamine and 2,3-diacylglucosamine-1-phosphate to form lipid A disaccharide, a precursor of lipid A, a phosphorylated glycolipid that anchors the lipopolysaccharide to the outer membrane of the cell. In Mannheimia succiniciproducens (strain KCTC 0769BP / MBEL55E), this protein is Lipid-A-disaccharide synthase.